Here is a 245-residue protein sequence, read N- to C-terminus: MEKAKSQSLEEDFEGQASHTGPKGVINDWRKFKLESEDSDSVAHSKKEILRQMSSPQSRDDKDSKERFSRKMSVQEYELIHKDKEDENCLRKYRRQCMQDMHQKLSFGPRYGFVYELESGEQFLETIEKEQKITTIVVHIYEDGIKGCDALNSSLICLAAEYPMVKFCKIKASNTGAGDRFSSDVLPTLLVYKGGELLSNFISVTEQLAEEFFTGDVESFLNEYGLLPEKEMHVLEQTNMEEDME.

Positions 1-70 (MEKAKSQSLE…DKDSKERFSR (70 aa)) are disordered. In terms of domain architecture, Phosducin spans 1-244 (MEKAKSQSLE…LEQTNMEEDM (244 aa)). Basic and acidic residues-rich tracts occupy residues 28–50 (DWRKFKLESEDSDSVAHSKKEIL) and 58–69 (SRDDKDSKERFS). A Phosphoserine; by PKA modification is found at S73. The thioredoxin fold stretch occupies residues 111 to 245 (YGFVYELESG…EQTNMEEDME (135 aa)).

Belongs to the phosducin family. In terms of assembly, interacts with CRX. Forms a complex with the beta and gamma subunits of the GTP-binding protein, transducin. In terms of processing, light-induced changes in cyclic nucleotide levels modulate the phosphorylation of this protein by cAMP kinase.

It is found in the cytoplasm. Its subcellular location is the cytosol. The protein resides in the nucleus. It localises to the cell projection. The protein localises to the cilium. It is found in the photoreceptor outer segment. Its subcellular location is the photoreceptor inner segment. Inhibits the transcriptional activation activity of the cone-rod homeobox CRX. May participate in the regulation of visual phototransduction or in the integration of photoreceptor metabolism. This is Phosducin (PDC) from Bos taurus (Bovine).